Reading from the N-terminus, the 382-residue chain is Chaperone protein DnaJ (382 aa).

The J domain occupies 5-69 (DLYGVLGVAK…QKRANYDQSG (65 aa)). Positions 104–123 (QFFGGGGGQRNPNAPRPGRD) are disordered. The CR-type zinc finger occupies 138–220 (GKKTKIKYNR…CGGSGHEEER (83 aa)). Zn(2+)-binding residues include Cys-151, Cys-154, Cys-168, Cys-171, Cys-194, Cys-197, Cys-208, and Cys-211. CXXCXGXG motif repeat units follow at residues 151 to 158 (CHTCGGNG), 168 to 175 (CHQCGGSG), 194 to 201 (CPVCHGTG), and 208 to 215 (CPTCGGSG). Residues 358 to 382 (ASGESVTGSGKGNLFNKMRDKFNEN) form a disordered region.

Belongs to the DnaJ family. In terms of assembly, homodimer. It depends on Zn(2+) as a cofactor.

It localises to the cytoplasm. Its function is as follows. Participates actively in the response to hyperosmotic and heat shock by preventing the aggregation of stress-denatured proteins and by disaggregating proteins, also in an autonomous, DnaK-independent fashion. Unfolded proteins bind initially to DnaJ; upon interaction with the DnaJ-bound protein, DnaK hydrolyzes its bound ATP, resulting in the formation of a stable complex. GrpE releases ADP from DnaK; ATP binding to DnaK triggers the release of the substrate protein, thus completing the reaction cycle. Several rounds of ATP-dependent interactions between DnaJ, DnaK and GrpE are required for fully efficient folding. Also involved, together with DnaK and GrpE, in the DNA replication of plasmids through activation of initiation proteins. The protein is Chaperone protein DnaJ of Levilactobacillus brevis (strain ATCC 367 / BCRC 12310 / CIP 105137 / JCM 1170 / LMG 11437 / NCIMB 947 / NCTC 947) (Lactobacillus brevis).